The sequence spans 337 residues: Inositol 2-dehydrogenase 1 (337 aa).

Belongs to the Gfo/Idh/MocA family. Homotetramer.

It catalyses the reaction myo-inositol + NAD(+) = scyllo-inosose + NADH + H(+). Its function is as follows. Involved in the oxidation of myo-inositol (MI) to 2-keto-myo-inositol (2KMI or 2-inosose). This Saccharopolyspora erythraea (strain ATCC 11635 / DSM 40517 / JCM 4748 / NBRC 13426 / NCIMB 8594 / NRRL 2338) protein is Inositol 2-dehydrogenase 1.